Here is a 256-residue protein sequence, read N- to C-terminus: Thiazole synthase (256 aa).

The active-site Schiff-base intermediate with DXP is the Lys97. Residues Gly158, 184-185 (AG), and 206-207 (NT) contribute to the 1-deoxy-D-xylulose 5-phosphate site.

Belongs to the ThiG family. Homotetramer. Forms heterodimers with either ThiH or ThiS.

The protein resides in the cytoplasm. It carries out the reaction [ThiS sulfur-carrier protein]-C-terminal-Gly-aminoethanethioate + 2-iminoacetate + 1-deoxy-D-xylulose 5-phosphate = [ThiS sulfur-carrier protein]-C-terminal Gly-Gly + 2-[(2R,5Z)-2-carboxy-4-methylthiazol-5(2H)-ylidene]ethyl phosphate + 2 H2O + H(+). It functions in the pathway cofactor biosynthesis; thiamine diphosphate biosynthesis. Functionally, catalyzes the rearrangement of 1-deoxy-D-xylulose 5-phosphate (DXP) to produce the thiazole phosphate moiety of thiamine. Sulfur is provided by the thiocarboxylate moiety of the carrier protein ThiS. In vitro, sulfur can be provided by H(2)S. This Pelotomaculum thermopropionicum (strain DSM 13744 / JCM 10971 / SI) protein is Thiazole synthase.